Here is a 104-residue protein sequence, read N- to C-terminus: uncharacterized protein (104 aa).

This is an uncharacterized protein from Methanocaldococcus jannaschii (strain ATCC 43067 / DSM 2661 / JAL-1 / JCM 10045 / NBRC 100440) (Methanococcus jannaschii).